A 388-amino-acid polypeptide reads, in one-letter code: Succinate--CoA ligase [ADP-forming] subunit beta (388 aa).

Residues 9–245 (KELLASYGLP…KSQENERELK (237 aa)) form the ATP-grasp domain. Residues K46, 53–55 (GRG), E100, Y103, and E108 contribute to the ATP site. Mg(2+)-binding residues include N200 and D214. Residues N265 and 322-324 (GIV) each bind substrate.

The protein belongs to the succinate/malate CoA ligase beta subunit family. In terms of assembly, heterotetramer of two alpha and two beta subunits. The cofactor is Mg(2+).

The catalysed reaction is succinate + ATP + CoA = succinyl-CoA + ADP + phosphate. It catalyses the reaction GTP + succinate + CoA = succinyl-CoA + GDP + phosphate. Its pathway is carbohydrate metabolism; tricarboxylic acid cycle; succinate from succinyl-CoA (ligase route): step 1/1. Functionally, succinyl-CoA synthetase functions in the citric acid cycle (TCA), coupling the hydrolysis of succinyl-CoA to the synthesis of either ATP or GTP and thus represents the only step of substrate-level phosphorylation in the TCA. The beta subunit provides nucleotide specificity of the enzyme and binds the substrate succinate, while the binding sites for coenzyme A and phosphate are found in the alpha subunit. This chain is Succinate--CoA ligase [ADP-forming] subunit beta, found in Neisseria meningitidis serogroup B (strain ATCC BAA-335 / MC58).